The sequence spans 354 residues: Protein Wnt-11 (354 aa).

Residues Met1–Gly24 form the signal peptide. Residues Asn40 and Asn90 are each glycosylated (N-linked (GlcNAc...) asparagine). 3 disulfides stabilise this stretch: Cys80–Cys91, Cys130–Cys138, and Cys140–Cys157. Asn160 carries an N-linked (GlcNAc...) asparagine glycan. 8 cysteine pairs are disulfide-bonded: Cys209–Cys223, Cys211–Cys218, Cys283–Cys314, Cys299–Cys309, Cys313–Cys353, Cys329–Cys344, Cys331–Cys341, and Cys336–Cys337. A lipid anchor (O-palmitoleoyl serine; by PORCN) is attached at Ser215. N-linked (GlcNAc...) asparagine glycosylation is found at Asn300 and Asn304.

The protein belongs to the Wnt family. Palmitoleoylation is required for efficient binding to frizzled receptors. Depalmitoleoylation leads to Wnt signaling pathway inhibition.

The protein resides in the secreted. It localises to the extracellular space. The protein localises to the extracellular matrix. Functionally, ligand for members of the frizzled family of seven transmembrane receptors. Probable developmental protein. May be a signaling molecule which affects the development of discrete regions of tissues. Is likely to signal over only few cell diameters. This chain is Protein Wnt-11 (Wnt11), found in Mus musculus (Mouse).